Reading from the N-terminus, the 360-residue chain is Venom serine protease Bi-VSP (360 aa).

The N-terminal stretch at 1–26 (MTGSKMLFACLALIAFLHPLVHVASA) is a signal peptide. A propeptide spanning residues 27–113 (QECTTPNNKA…CGFSNVSHTR (87 aa)) is cleaved from the precursor. Residues 28-79 (ECTTPNNKAGKCLGIRVCKPLLEMLQTQGHAAADFLRQSVCKYENNNPIVCC) form the Clip domain. 7 cysteine pairs are disulfide-bonded: cysteine 29–cysteine 78, cysteine 39–cysteine 68, cysteine 45–cysteine 79, cysteine 104–cysteine 230, cysteine 147–cysteine 163, cysteine 278–cysteine 296, and cysteine 307–cysteine 335. A glycan (N-linked (GlcNAc...) asparagine) is linked at asparagine 108. The Peptidase S1 domain maps to 114-360 (VVGGKPAVLG…LDDFILPAMQ (247 aa)). Histidine 162 (charge relay system) is an active-site residue. The Ca(2+) site is built by aspartate 176, asparagine 178, arginine 181, and aspartate 184. Aspartate 210 serves as the catalytic Charge relay system. Catalysis depends on serine 311, which acts as the Charge relay system.

The protein belongs to the peptidase S1 family. CLIP subfamily. In terms of tissue distribution, expressed by the venom gland.

The protein resides in the secreted. Functionally, multifunctional venom serine protease. In insects, it acts as an arthropod prophenoloxidase-activating factor, thereby triggering the phenoloxidase cascade. When injected into larvae, it induces a lethal melanization response in target insects by modulating the innate immune response. In mammals, it converts fibrinogen into fibrin, activates prothrombin, and also degrades fibrin. In mammal, it may act in a cooperative manner with the serine protease inhibitor Bi-KTI (AC G3LH89) to promote the spread of bee venom under anti-bleeding conditions. In Bombus ignitus (Bumblebee), this protein is Venom serine protease Bi-VSP.